The following is a 228-amino-acid chain: Phosphoribosylformylglycinamidine synthase subunit PurQ (228 aa).

One can recognise a Glutamine amidotransferase type-1 domain in the interval 3-226 (FAVIVFPGSN…VNYWRETHVV (224 aa)). Cysteine 86 functions as the Nucleophile in the catalytic mechanism. Active-site residues include histidine 195 and glutamate 197.

Part of the FGAM synthase complex composed of 1 PurL, 1 PurQ and 2 PurS subunits.

The protein localises to the cytoplasm. The enzyme catalyses N(2)-formyl-N(1)-(5-phospho-beta-D-ribosyl)glycinamide + L-glutamine + ATP + H2O = 2-formamido-N(1)-(5-O-phospho-beta-D-ribosyl)acetamidine + L-glutamate + ADP + phosphate + H(+). The catalysed reaction is L-glutamine + H2O = L-glutamate + NH4(+). The protein operates within purine metabolism; IMP biosynthesis via de novo pathway; 5-amino-1-(5-phospho-D-ribosyl)imidazole from N(2)-formyl-N(1)-(5-phospho-D-ribosyl)glycinamide: step 1/2. Part of the phosphoribosylformylglycinamidine synthase complex involved in the purines biosynthetic pathway. Catalyzes the ATP-dependent conversion of formylglycinamide ribonucleotide (FGAR) and glutamine to yield formylglycinamidine ribonucleotide (FGAM) and glutamate. The FGAM synthase complex is composed of three subunits. PurQ produces an ammonia molecule by converting glutamine to glutamate. PurL transfers the ammonia molecule to FGAR to form FGAM in an ATP-dependent manner. PurS interacts with PurQ and PurL and is thought to assist in the transfer of the ammonia molecule from PurQ to PurL. This Geobacillus thermodenitrificans (strain NG80-2) protein is Phosphoribosylformylglycinamidine synthase subunit PurQ.